Reading from the N-terminus, the 386-residue chain is Succinate--CoA ligase [ADP-forming] subunit beta (386 aa).

The region spanning 9-237 (KEVLRDFGVN…LSAEHPLEVE (229 aa)) is the ATP-grasp domain. ATP contacts are provided by residues lysine 45, 52–54 (GRG), valine 94, and glutamate 101. Asparagine 192 and aspartate 206 together coordinate Mg(2+). Substrate-binding positions include asparagine 258 and 315 to 317 (GIT).

This sequence belongs to the succinate/malate CoA ligase beta subunit family. Heterotetramer of two alpha and two beta subunits. It depends on Mg(2+) as a cofactor.

It carries out the reaction succinate + ATP + CoA = succinyl-CoA + ADP + phosphate. The catalysed reaction is GTP + succinate + CoA = succinyl-CoA + GDP + phosphate. Its pathway is carbohydrate metabolism; tricarboxylic acid cycle; succinate from succinyl-CoA (ligase route): step 1/1. In terms of biological role, succinyl-CoA synthetase functions in the citric acid cycle (TCA), coupling the hydrolysis of succinyl-CoA to the synthesis of either ATP or GTP and thus represents the only step of substrate-level phosphorylation in the TCA. The beta subunit provides nucleotide specificity of the enzyme and binds the substrate succinate, while the binding sites for coenzyme A and phosphate are found in the alpha subunit. The polypeptide is Succinate--CoA ligase [ADP-forming] subunit beta (Deinococcus radiodurans (strain ATCC 13939 / DSM 20539 / JCM 16871 / CCUG 27074 / LMG 4051 / NBRC 15346 / NCIMB 9279 / VKM B-1422 / R1)).